We begin with the raw amino-acid sequence, 465 residues long: Cysteine--tRNA ligase (465 aa).

Residue Cys-27 coordinates Zn(2+). The 'HIGH' region signature appears at 29 to 39; it reads PTVYDDAHLGH. Cys-207, His-237, and Glu-241 together coordinate Zn(2+). The 'KMSKS' region signature appears at 269-273; the sequence is KMSKS. ATP is bound at residue Lys-272.

It belongs to the class-I aminoacyl-tRNA synthetase family. Monomer. Zn(2+) is required as a cofactor.

It localises to the cytoplasm. The enzyme catalyses tRNA(Cys) + L-cysteine + ATP = L-cysteinyl-tRNA(Cys) + AMP + diphosphate. The polypeptide is Cysteine--tRNA ligase (Nitratiruptor sp. (strain SB155-2)).